Consider the following 62-residue polypeptide: Disintegrin schistatin-like subunit A (62 aa).

The Disintegrin domain maps to 1–62; sequence SVNPCCDPVI…TTDCPRNRYN (62 aa). 4 disulfide bridges follow: cysteine 5–cysteine 28, cysteine 19–cysteine 25, cysteine 24–cysteine 49, and cysteine 37–cysteine 56. The Cell attachment site motif lies at 41–43; the sequence is RGD.

Belongs to the disintegrin family. Dimeric disintegrin subfamily. As to quaternary structure, heterodimer with subunit B; disulfide-linked. Expressed by the venom gland.

Its subcellular location is the secreted. Its function is as follows. May bind to both alpha-IIb/beta-3 (ITGA2B/ITGB3) and alpha-V/beta-3 (ITGAV/ITGB3) integrins, and may inhibit platelet aggregation. In Echis carinatus (Saw-scaled viper), this protein is Disintegrin schistatin-like subunit A.